The sequence spans 480 residues: Cysteine--tRNA ligase (480 aa).

Cys27 contacts Zn(2+). The 'HIGH' region motif lies at 29–39 (PTVYNYAHIGN). Cys221, His246, and Glu250 together coordinate Zn(2+). Positions 278 to 282 (KMSKS) match the 'KMSKS' region motif. Lys281 serves as a coordination point for ATP.

The protein belongs to the class-I aminoacyl-tRNA synthetase family. Monomer. The cofactor is Zn(2+).

The protein localises to the cytoplasm. The catalysed reaction is tRNA(Cys) + L-cysteine + ATP = L-cysteinyl-tRNA(Cys) + AMP + diphosphate. This chain is Cysteine--tRNA ligase, found in Borreliella burgdorferi (strain ZS7) (Borrelia burgdorferi).